A 285-amino-acid polypeptide reads, in one-letter code: Single myb histone 3 (285 aa).

The disordered stretch occupies residues 1-35 (MGAPKQKWTSEEEDALRRGVRKHGAGKWRTIQKDP). In terms of domain architecture, HTH myb-type spans 1–60 (MGAPKQKWTSEEEDALRRGVRKHGAGKWRTIQKDPQFSPILSSRSNIDLKDKWRNLSFSA). The H-T-H motif DNA-binding region spans 28–56 (WRTIQKDPQFSPILSSRSNIDLKDKWRNL). An H15 domain is found at 113 to 181 (TPPKYGAMIM…KVDNFYRLPD (69 aa)). The stretch at 226-255 (VKVTDAEAKAHDAHDQMMEAERMLKMAEDT) forms a coiled coil.

It belongs to the histone H1/H5 family. SMH subfamily. In terms of assembly, forms a homodimer and heterodimers.

The protein resides in the nucleus. Its subcellular location is the chromosome. The protein localises to the nucleolus. It localises to the telomere. Its function is as follows. Binds preferentially double-stranded telomeric repeats, but may also bind to the single telomeric strand. The polypeptide is Single myb histone 3 (SMH3) (Zea mays (Maize)).